Reading from the N-terminus, the 1203-residue chain is DNA-directed RNA polymerase subunit beta (1203 aa).

Positions Ala-1174–Ala-1195 are enriched in basic and acidic residues. The disordered stretch occupies residues Ala-1174 to Glu-1203.

Belongs to the RNA polymerase beta chain family. The RNAP catalytic core consists of 2 alpha, 1 beta, 1 beta' and 1 omega subunit. When a sigma factor is associated with the core the holoenzyme is formed, which can initiate transcription.

It catalyses the reaction RNA(n) + a ribonucleoside 5'-triphosphate = RNA(n+1) + diphosphate. Functionally, DNA-dependent RNA polymerase catalyzes the transcription of DNA into RNA using the four ribonucleoside triphosphates as substrates. This Streptococcus pneumoniae (strain P1031) protein is DNA-directed RNA polymerase subunit beta.